The sequence spans 100 residues: Urease subunit gamma (100 aa).

It belongs to the urease gamma subunit family. In terms of assembly, heterotrimer of UreA (gamma), UreB (beta) and UreC (alpha) subunits. Three heterotrimers associate to form the active enzyme.

Its subcellular location is the cytoplasm. It catalyses the reaction urea + 2 H2O + H(+) = hydrogencarbonate + 2 NH4(+). It functions in the pathway nitrogen metabolism; urea degradation; CO(2) and NH(3) from urea (urease route): step 1/1. This is Urease subunit gamma from Ruegeria pomeroyi (strain ATCC 700808 / DSM 15171 / DSS-3) (Silicibacter pomeroyi).